The chain runs to 685 residues: Glycine--tRNA ligase beta subunit (685 aa).

Belongs to the class-II aminoacyl-tRNA synthetase family. Tetramer of two alpha and two beta subunits.

It is found in the cytoplasm. The enzyme catalyses tRNA(Gly) + glycine + ATP = glycyl-tRNA(Gly) + AMP + diphosphate. The polypeptide is Glycine--tRNA ligase beta subunit (Leuconostoc mesenteroides subsp. mesenteroides (strain ATCC 8293 / DSM 20343 / BCRC 11652 / CCM 1803 / JCM 6124 / NCDO 523 / NBRC 100496 / NCIMB 8023 / NCTC 12954 / NRRL B-1118 / 37Y)).